A 301-amino-acid polypeptide reads, in one-letter code: tRNA U34 carboxymethyltransferase (301 aa).

Residues lysine 70, tryptophan 84, lysine 89, glycine 108, 130–132, 157–158, tyrosine 177, and arginine 292 each bind carboxy-S-adenosyl-L-methionine; these read DPS and VE.

This sequence belongs to the class I-like SAM-binding methyltransferase superfamily. CmoB family. Homotetramer.

It catalyses the reaction carboxy-S-adenosyl-L-methionine + 5-hydroxyuridine(34) in tRNA = 5-carboxymethoxyuridine(34) in tRNA + S-adenosyl-L-homocysteine + H(+). Functionally, catalyzes carboxymethyl transfer from carboxy-S-adenosyl-L-methionine (Cx-SAM) to 5-hydroxyuridine (ho5U) to form 5-carboxymethoxyuridine (cmo5U) at position 34 in tRNAs. In Sulfurovum sp. (strain NBC37-1), this protein is tRNA U34 carboxymethyltransferase.